Consider the following 350-residue polypeptide: MKELVVDLKEKSYSIIIKKGLINELSNEINKVYKGKKIFILTDENVNYHYGDKVKDSLINNGYDVKKIVLKPGEETKSFNTLPKIYNEFLDFKLTRSDLIITLGGGVIGDLGGFAASTFLRGIDFIQVPTSLLAQVDSSVGGKVAVDLDRGKNLVGSFYHPKVVLIDPDVLITLEEKFFKDGMAEVIKYGCIKDKEFFYKLKEFKSKDEVLDNIEDIIYTCCNIKRIVVENDEKDKGERMLLNFGHTLGHAIEAYYNFNKYTHGEAVGIGMYKIIKISEEKGIMPKGCADEIKDILIQYSLPYDIEIENSDEILETISLDKKNINSVLKIVLLESIGQSFLKSTNIEFFK.

Residues 106–110, 130–131, lysine 143, and lysine 152 each bind NAD(+); these read GVIGD and TS. Residues glutamate 185, histidine 246, and histidine 263 each coordinate Zn(2+).

This sequence belongs to the sugar phosphate cyclases superfamily. Dehydroquinate synthase family. Co(2+) serves as cofactor. It depends on Zn(2+) as a cofactor. NAD(+) is required as a cofactor.

It localises to the cytoplasm. It carries out the reaction 7-phospho-2-dehydro-3-deoxy-D-arabino-heptonate = 3-dehydroquinate + phosphate. It participates in metabolic intermediate biosynthesis; chorismate biosynthesis; chorismate from D-erythrose 4-phosphate and phosphoenolpyruvate: step 2/7. Catalyzes the conversion of 3-deoxy-D-arabino-heptulosonate 7-phosphate (DAHP) to dehydroquinate (DHQ). This chain is 3-dehydroquinate synthase, found in Clostridium botulinum (strain Alaska E43 / Type E3).